Consider the following 3251-residue polypeptide: Centrosome-associated protein ALMS1 (3251 aa).

The segment covering 1 to 26 (MEPEDLPWPDELEEEEEEEEEEGEEE) has biased composition (acidic residues). Residues 1-116 (MEPEDLPWPD…PPPPLSPRLR (116 aa)) are disordered. The span at 34-47 (NASAAATEEALTSE) shows a compositional bias: low complexity. Positions 99–112 (LPPPTPPPPPPPLS) are enriched in pro residues. Position 401 is a phosphoserine (Ser-401). 17 consecutive repeat copies span residues 440–485 (QEEL…SIFY), 486–534 (QHPV…VSVI), 540–587 (QKTP…SRTY), 588–638 (QHKM…SVFY), 639–684 (QQGL…VSPY), 685–731 (QLTL…NSSY), 732–777 (QQKF…SIFY), 778–824 (QQTL…RIFY), 825–871 (QQTL…IIFY), 872–917 (QAGF…IIFY), 918–959 (HQAL…IIFY), 960–1005 (QQPM…TVSY), 1006–1048 (QKEF…PSAY), 1115–1163 (QQEL…LSDY), 1164–1208 (QKAS…HEIS), 1269–1314 (KQLR…DSFY), and 1315–1362 (PQEL…LISE). The segment at 440-1362 (QEELPDRHLN…HSEKHQLISE (923 aa)) is 17 X 47 AA approximate tandem repeat. The tract at residues 615–686 (FESGPAGQKS…AEKPVSPYQL (72 aa)) is disordered. The interval 963 to 986 (MSDSQRTKGHKESDVPGPTDQKTG) is disordered. Disordered regions lie at residues 1094–1115 (ADRK…GFHQ) and 1142–1189 (QTPG…SDQK). Basic and acidic residues predominate over residues 1158-1173 (EKLSDYQKASPHRDLT). The residue at position 1305 (Ser-1305) is a Phosphoserine. A phosphoserine mark is found at Ser-1623, Ser-1788, Ser-1916, and Ser-1958. Disordered regions lie at residues 2421–2452 (KSDT…RDDD), 2464–2485 (GIYS…DAAA), 2659–2685 (IKNQ…TPEL), 2738–2804 (SLRA…SSQF), 2822–2871 (FNNV…PLNE), and 3002–3027 (FPTP…EKAK). Residues 2423-2434 (DTTVESSHSGSN) are compositionally biased toward polar residues. Composition is skewed to basic and acidic residues over residues 2659–2681 (IKNQ…DQKV) and 2747–2760 (DDSR…EWTG). Residues 2762 to 2775 (RQQKQKGKQHRKWS) are compositionally biased toward basic residues. The span at 2823 to 2854 (NNVSNTSLDSRPSEESVSLTDSPNIFSSTDSP) shows a compositional bias: polar residues. Residues 3129–3251 (TLQESLQLHR…HLLGRKVPWD (123 aa)) are ALMS motif.

The protein belongs to the ALMS1 family. As to expression, ubiquitously expressed.

It localises to the cytoplasm. The protein localises to the cytoskeleton. Its subcellular location is the microtubule organizing center. It is found in the centrosome. The protein resides in the cilium basal body. It localises to the spindle pole. Its function is as follows. Involved in PCM1-dependent intracellular transport. Required, directly or indirectly, for the localization of NCAPD2 to the proximal ends of centrioles. Required for proper formation and/or maintenance of primary cilia (PC), microtubule-based structures that protrude from the surface of epithelial cells. This chain is Centrosome-associated protein ALMS1 (Alms1), found in Mus musculus (Mouse).